The primary structure comprises 179 residues: NADH:FAD oxidoreductase (179 aa).

Residue 48 to 51 (TCSA) coordinates FAD. 54–57 (SVCD) provides a ligand contact to NAD(+). Residues 65–71 (CINRKSY), A99, 104–109 (VPMEER), and S144 each bind FAD. NAD(+)-binding positions include H145 and 166–169 (YHRR). An FAD-binding site is contributed by Y166.

This sequence belongs to the non-flavoprotein flavin reductase family. In terms of assembly, homodimer. The chlorophenol-4-monooxygenase is composed of an oxygenase component TftD and a reductase component TftC.

The catalysed reaction is FADH2 + NAD(+) = FAD + NADH + 2 H(+). Its pathway is xenobiotic degradation. In terms of biological role, reductase component of a two-component system that degrades 2,4,5-trichlorophenol. TftC provides the FADH(2) required by TftD. TftD oxidizes 2,4,5-trichlorophenol (2,4,5-TCP) to 2,5-dichloro-p-benzoquinone, which is chemically reduced to 2,5-dichloro-p-hydroquinone (2,5-DiCHQ). Then, TftD oxidizes the latter to 5-chloro-2-hydroxy-p-benzoquinone. The sequence is that of NADH:FAD oxidoreductase (tftC) from Burkholderia cepacia (Pseudomonas cepacia).